We begin with the raw amino-acid sequence, 366 residues long: Histidinol-phosphate aminotransferase 2 (366 aa).

Polar residues predominate over residues 1–11 (MQVKDQLSSLQ). The tract at residues 1 to 21 (MQVKDQLSSLQPYKPGKSPEQ) is disordered. An N6-(pyridoxal phosphate)lysine modification is found at lysine 222.

It belongs to the class-II pyridoxal-phosphate-dependent aminotransferase family. Histidinol-phosphate aminotransferase subfamily. As to quaternary structure, homodimer. Requires pyridoxal 5'-phosphate as cofactor.

It carries out the reaction L-histidinol phosphate + 2-oxoglutarate = 3-(imidazol-4-yl)-2-oxopropyl phosphate + L-glutamate. Its pathway is amino-acid biosynthesis; L-histidine biosynthesis; L-histidine from 5-phospho-alpha-D-ribose 1-diphosphate: step 7/9. The sequence is that of Histidinol-phosphate aminotransferase 2 from Bacillus cereus (strain ATCC 10987 / NRS 248).